The sequence spans 136 residues: Large ribosomal subunit protein uL16 (136 aa).

It belongs to the universal ribosomal protein uL16 family. Part of the 50S ribosomal subunit.

Its function is as follows. Binds 23S rRNA and is also seen to make contacts with the A and possibly P site tRNAs. In Rickettsia prowazekii (strain Madrid E), this protein is Large ribosomal subunit protein uL16.